The following is a 107-amino-acid chain: Putative double-stranded DNA mimic protein YpsIP31758_1954 (107 aa).

This sequence belongs to the putative dsDNA mimic protein family.

May act as a double-stranded DNA (dsDNA) mimic. Probably regulates the activity of a dsDNA-binding protein. The sequence is that of Putative double-stranded DNA mimic protein YpsIP31758_1954 from Yersinia pseudotuberculosis serotype O:1b (strain IP 31758).